The primary structure comprises 287 residues: Urease accessory protein UreD (287 aa).

It belongs to the UreD family. UreD, UreF and UreG form a complex that acts as a GTP-hydrolysis-dependent molecular chaperone, activating the urease apoprotein by helping to assemble the nickel containing metallocenter of UreC. The UreE protein probably delivers the nickel.

It localises to the cytoplasm. Required for maturation of urease via the functional incorporation of the urease nickel metallocenter. This Aliivibrio fischeri (strain MJ11) (Vibrio fischeri) protein is Urease accessory protein UreD.